A 121-amino-acid chain; its full sequence is Ribosome-binding factor A (121 aa).

It belongs to the RbfA family. In terms of assembly, monomer. Binds 30S ribosomal subunits, but not 50S ribosomal subunits or 70S ribosomes.

It is found in the cytoplasm. Its function is as follows. One of several proteins that assist in the late maturation steps of the functional core of the 30S ribosomal subunit. Associates with free 30S ribosomal subunits (but not with 30S subunits that are part of 70S ribosomes or polysomes). Required for efficient processing of 16S rRNA. May interact with the 5'-terminal helix region of 16S rRNA. The polypeptide is Ribosome-binding factor A (Paraburkholderia xenovorans (strain LB400)).